We begin with the raw amino-acid sequence, 291 residues long: 33 kDa chaperonin (291 aa).

2 cysteine pairs are disulfide-bonded: Cys237-Cys239 and Cys270-Cys273.

Belongs to the HSP33 family. In terms of processing, under oxidizing conditions two disulfide bonds are formed involving the reactive cysteines. Under reducing conditions zinc is bound to the reactive cysteines and the protein is inactive.

The protein localises to the cytoplasm. In terms of biological role, redox regulated molecular chaperone. Protects both thermally unfolding and oxidatively damaged proteins from irreversible aggregation. Plays an important role in the bacterial defense system toward oxidative stress. The protein is 33 kDa chaperonin of Bacillus mycoides (strain KBAB4) (Bacillus weihenstephanensis).